The primary structure comprises 211 residues: uncharacterized protein (211 aa).

Topologically, residues 1–33 (MQNGTEDKSNIPARSNDDVLPPLAVRLTMKVMR) are cytoplasmic. The helical transmembrane segment at 34–54 (LIFIGKMFAYSFVPFPPFKLL) threads the bilayer. The Lumenal segment spans residues 55 to 58 (TFDN). The chain crosses the membrane as a helical span at residues 59 to 79 (TVGWFVAYSAIVSIWGFAVWM). Over 80-116 (ERGYRHKINLLPPRCTKIRCSRCNTRIRSPNWFKYKN) the chain is Cytoplasmic. The helical transmembrane segment at 117–137 (WLYFFLLYVSLTTSNLIIQLA) threads the bilayer. Topologically, residues 138–162 (SFMTEMSRRGISVPGTKDPGKRDYL) are lumenal. A helical transmembrane segment spans residues 163–183 (GLIIPMRFIGAFIHYMTANLF). At 184–211 (KEYYLHNGPLEKNDRPSTDEKTSENETL) the chain is on the cytoplasmic side.

Its subcellular location is the endoplasmic reticulum membrane. This is an uncharacterized protein from Saccharomyces cerevisiae (strain ATCC 204508 / S288c) (Baker's yeast).